Here is a 146-residue protein sequence, read N- to C-terminus: Phospholipase A2 PS22 (146 aa).

Positions 1-19 (MYPAHLLVLLAVCVSLLGA) are cleaved as a signal peptide. Residues 20-27 (ASVPPQPL) constitute a propeptide that is removed on maturation. Intrachain disulfides connect Cys38–Cys98, Cys54–Cys145, Cys56–Cys72, Cys71–Cys126, Cys78–Cys119, Cys87–Cys112, and Cys105–Cys117. Ca(2+)-binding residues include Tyr55, Gly57, and Gly59. His75 is a catalytic residue. A Ca(2+)-binding site is contributed by Asp76. Asp120 is an active-site residue.

Belongs to the phospholipase A2 family. Group I subfamily. D49 sub-subfamily. Requires Ca(2+) as cofactor. In terms of tissue distribution, expressed by the venom gland.

The protein resides in the secreted. The catalysed reaction is a 1,2-diacyl-sn-glycero-3-phosphocholine + H2O = a 1-acyl-sn-glycero-3-phosphocholine + a fatty acid + H(+). Its function is as follows. Snake venom phospholipase A2 (PLA2) that inhibits collagen-induced platelet aggregation. PLA2 catalyzes the calcium-dependent hydrolysis of the 2-acyl groups in 3-sn-phosphoglycerides. This Drysdalia coronoides (White-lipped snake) protein is Phospholipase A2 PS22.